Here is a 188-residue protein sequence, read N- to C-terminus: Crossover junction endodeoxyribonuclease RuvC (188 aa).

Catalysis depends on residues D14, E74, and D149. Mg(2+)-binding residues include D14, E74, and D149.

It belongs to the RuvC family. In terms of assembly, homodimer which binds Holliday junction (HJ) DNA. The HJ becomes 2-fold symmetrical on binding to RuvC with unstacked arms; it has a different conformation from HJ DNA in complex with RuvA. In the full resolvosome a probable DNA-RuvA(4)-RuvB(12)-RuvC(2) complex forms which resolves the HJ. Mg(2+) is required as a cofactor.

It is found in the cytoplasm. It catalyses the reaction Endonucleolytic cleavage at a junction such as a reciprocal single-stranded crossover between two homologous DNA duplexes (Holliday junction).. In terms of biological role, the RuvA-RuvB-RuvC complex processes Holliday junction (HJ) DNA during genetic recombination and DNA repair. Endonuclease that resolves HJ intermediates. Cleaves cruciform DNA by making single-stranded nicks across the HJ at symmetrical positions within the homologous arms, yielding a 5'-phosphate and a 3'-hydroxyl group; requires a central core of homology in the junction. The consensus cleavage sequence is 5'-(A/T)TT(C/G)-3'. Cleavage occurs on the 3'-side of the TT dinucleotide at the point of strand exchange. HJ branch migration catalyzed by RuvA-RuvB allows RuvC to scan DNA until it finds its consensus sequence, where it cleaves and resolves the cruciform DNA. The sequence is that of Crossover junction endodeoxyribonuclease RuvC from Bacteroides fragilis (strain ATCC 25285 / DSM 2151 / CCUG 4856 / JCM 11019 / LMG 10263 / NCTC 9343 / Onslow / VPI 2553 / EN-2).